Reading from the N-terminus, the 155-residue chain is Small ribosomal subunit protein uS7 (155 aa).

Belongs to the universal ribosomal protein uS7 family. In terms of assembly, part of the 30S ribosomal subunit. Contacts proteins S9 and S11.

In terms of biological role, one of the primary rRNA binding proteins, it binds directly to 16S rRNA where it nucleates assembly of the head domain of the 30S subunit. Is located at the subunit interface close to the decoding center, probably blocks exit of the E-site tRNA. In Xanthomonas oryzae pv. oryzae (strain MAFF 311018), this protein is Small ribosomal subunit protein uS7.